We begin with the raw amino-acid sequence, 697 residues long: Putative flagellar export/assembly protein LfhA (697 aa).

The next 7 helical transmembrane spans lie at 19 to 39 (VPLV…PALL), 40 to 60 (DILF…AVSA), 66 to 86 (FSLF…LNVA), 116 to 136 (GNFV…FIVV), 204 to 224 (AIAG…IGIF), 242 to 262 (IGDG…AAII), and 280 to 302 (LLAS…VVPG).

The protein belongs to the FHIPEP (flagella/HR/invasion proteins export pore) family.

The protein localises to the cell inner membrane. Part of the flagellar gene cluster Flag-2. However, the Flag-2 flagellar system could be inactive in strain 042 due to a frameshift in lfgC. This Escherichia coli O44:H18 (strain 042 / EAEC) protein is Putative flagellar export/assembly protein LfhA.